We begin with the raw amino-acid sequence, 362 residues long: Protein-glutamate methylesterase/protein-glutamine glutaminase 1 (362 aa).

Residues 10–127 (RVLVVDDSSF…ADAQRVFREE (118 aa)) enclose the Response regulatory domain. At Asp-61 the chain carries 4-aspartylphosphate. The CheB-type methylesterase domain maps to 163–357 (PRPSQALAGK…LPLTQIGSEI (195 aa)). Active-site residues include Ser-181, His-208, and Asp-306.

Belongs to the CheB family. Post-translationally, phosphorylated by CheA. Phosphorylation of the N-terminal regulatory domain activates the methylesterase activity.

The protein localises to the cytoplasm. It catalyses the reaction [protein]-L-glutamate 5-O-methyl ester + H2O = L-glutamyl-[protein] + methanol + H(+). The catalysed reaction is L-glutaminyl-[protein] + H2O = L-glutamyl-[protein] + NH4(+). Involved in chemotaxis. Part of a chemotaxis signal transduction system that modulates chemotaxis in response to various stimuli. Catalyzes the demethylation of specific methylglutamate residues introduced into the chemoreceptors (methyl-accepting chemotaxis proteins or MCP) by CheR. Also mediates the irreversible deamidation of specific glutamine residues to glutamic acid. This chain is Protein-glutamate methylesterase/protein-glutamine glutaminase 1, found in Geobacter sulfurreducens (strain ATCC 51573 / DSM 12127 / PCA).